Consider the following 344-residue polypeptide: Transmembrane protein 268 (344 aa).

The interval 1–31 is disordered; sequence MACEPQMDPGGAAGPLPTSSPGWSPLPGGSP. Over residues 14-27 the composition is skewed to low complexity; sequence GPLPTSSPGWSPLP. The next 2 helical transmembrane spans lie at 106–126 and 133–153; these read AFAVVFYVVVWANIYSTSQMF and AGVLLVTLAATSLTLTLVVIF. The tract at residues 244 to 266 is disordered; that stretch reads TANEGPENLLEETPLLPDRPGST. Positions 247–259 are enriched in low complexity; the sequence is EGPENLLEETPLL.

As to quaternary structure, interacts with ITGAM; this interaction inhibits ITGAM degradation via the endosome-lysosome pathway. Interacts with ITGB4; this interaction prevents ITGB4 degradation.

It is found in the cell membrane. Stabilizes cell surface expression of ITGAM and participates in the adhesion and migration of phagocytes during bacterial clearance. The protein is Transmembrane protein 268 (TMEM268) of Bos taurus (Bovine).